The following is a 71-amino-acid chain: Large ribosomal subunit protein bL31 (71 aa).

Cysteine 16, cysteine 18, cysteine 36, and cysteine 39 together coordinate Zn(2+).

It belongs to the bacterial ribosomal protein bL31 family. Type A subfamily. In terms of assembly, part of the 50S ribosomal subunit. It depends on Zn(2+) as a cofactor.

Functionally, binds the 23S rRNA. The chain is Large ribosomal subunit protein bL31 from Syntrophus aciditrophicus (strain SB).